Here is a 282-residue protein sequence, read N- to C-terminus: 4-diphosphocytidyl-2-C-methyl-D-erythritol kinase (282 aa).

Lys-11 is an active-site residue. ATP is bound at residue 93–103; that stretch reads LVSAGLAGGSA. Asp-133 is an active-site residue.

Belongs to the GHMP kinase family. IspE subfamily.

The catalysed reaction is 4-CDP-2-C-methyl-D-erythritol + ATP = 4-CDP-2-C-methyl-D-erythritol 2-phosphate + ADP + H(+). Its pathway is isoprenoid biosynthesis; isopentenyl diphosphate biosynthesis via DXP pathway; isopentenyl diphosphate from 1-deoxy-D-xylulose 5-phosphate: step 3/6. Its function is as follows. Catalyzes the phosphorylation of the position 2 hydroxy group of 4-diphosphocytidyl-2C-methyl-D-erythritol. The sequence is that of 4-diphosphocytidyl-2-C-methyl-D-erythritol kinase from Ehrlichia chaffeensis (strain ATCC CRL-10679 / Arkansas).